The chain runs to 278 residues: Phosphonates import ATP-binding protein PhnC 1 (278 aa).

In terms of domain architecture, ABC transporter spans 5 to 253 (IRVDSLNKTF…FLNELYGAEG (249 aa)). 37-44 (GASGSGKS) contributes to the ATP binding site.

The protein belongs to the ABC transporter superfamily. Phosphonates importer (TC 3.A.1.9.1) family. As to quaternary structure, the complex is composed of two ATP-binding proteins (PhnC), two transmembrane proteins (PhnE) and a solute-binding protein (PhnD).

It localises to the cell inner membrane. The enzyme catalyses phosphonate(out) + ATP + H2O = phosphonate(in) + ADP + phosphate + H(+). In terms of biological role, part of the ABC transporter complex PhnCDE involved in phosphonates import. Responsible for energy coupling to the transport system. In Pseudomonas aeruginosa (strain UCBPP-PA14), this protein is Phosphonates import ATP-binding protein PhnC 1.